Consider the following 124-residue polypeptide: Late histone H2B.2.1 (124 aa).

The interval 1–32 (MPAKQTSGKGAKKAGKAKGRPAGASKTRRRKR) is disordered. Basic residues predominate over residues 10 to 19 (GAKKAGKAKG). An O-linked (GlcNAc) serine glycan is attached at Ser-111. Residue Lys-119 forms a Glycyl lysine isopeptide (Lys-Gly) (interchain with G-Cter in ubiquitin) linkage.

Belongs to the histone H2B family. In terms of assembly, the nucleosome is a histone octamer containing two molecules each of H2A, H2B, H3 and H4 assembled in one H3-H4 heterotetramer and two H2A-H2B heterodimers. The octamer wraps approximately 147 bp of DNA. Monoubiquitination of Lys-119 gives a specific tag for epigenetic transcriptional activation and is also prerequisite for histone H3 'Lys-4' and 'Lys-79' methylation. In terms of processing, glcNAcylation at Ser-111 promotes monoubiquitination of Lys-119. It fluctuates in response to extracellular glucose, and associates with transcribed genes.

It is found in the nucleus. It localises to the chromosome. Its function is as follows. Core component of nucleosome. Nucleosomes wrap and compact DNA into chromatin, limiting DNA accessibility to the cellular machineries which require DNA as a template. Histones thereby play a central role in transcription regulation, DNA repair, DNA replication and chromosomal stability. DNA accessibility is regulated via a complex set of post-translational modifications of histones, also called histone code, and nucleosome remodeling. The chain is Late histone H2B.2.1 from Psammechinus miliaris (Green sea urchin).